The sequence spans 271 residues: Probable diacyglycerol O-acyltransferase tgs3 (271 aa).

It belongs to the long-chain O-acyltransferase family.

It catalyses the reaction an acyl-CoA + a 1,2-diacyl-sn-glycerol = a triacyl-sn-glycerol + CoA. It functions in the pathway glycerolipid metabolism; triacylglycerol biosynthesis. In terms of biological role, catalyzes the terminal and only committed step in triacylglycerol synthesis by using diacylglycerol and fatty acyl CoA as substrates. Required for storage lipid synthesis. The polypeptide is Probable diacyglycerol O-acyltransferase tgs3 (tgs3) (Mycobacterium tuberculosis (strain CDC 1551 / Oshkosh)).